Reading from the N-terminus, the 126-residue chain is Large ribosomal subunit protein bL19 (126 aa).

The protein belongs to the bacterial ribosomal protein bL19 family.

Its function is as follows. This protein is located at the 30S-50S ribosomal subunit interface and may play a role in the structure and function of the aminoacyl-tRNA binding site. The polypeptide is Large ribosomal subunit protein bL19 (Albidiferax ferrireducens (strain ATCC BAA-621 / DSM 15236 / T118) (Rhodoferax ferrireducens)).